Reading from the N-terminus, the 571-residue chain is Alpha-1D adrenergic receptor (571 aa).

At 1–94 (MTFRDLLSVN…AVGGLVVSAQ (94 aa)) the chain is on the extracellular side. The disordered stretch occupies residues 13–75 (GSRSDGSAGG…SSAGEPGAAG (63 aa)). Over residues 19 to 34 (SAGGASAGGSGGGSGG) the composition is skewed to gly residues. Over residues 35 to 47 (AAASEGRAVDGVP) the composition is skewed to low complexity. The segment covering 48–57 (GTAGSGGVVG) has biased composition (gly residues). Residues Asn64 and Asn81 are each glycosylated (N-linked (GlcNAc...) asparagine). A helical membrane pass occupies residues 95-120 (GVGVGVFLAAFILMAVAGNLLVILSV). Topologically, residues 121–132 (ACNRHLQTVTNY) are cytoplasmic. Residues 133-158 (FIVNLAVADLLLSATVLPFSATMEVL) traverse the membrane as a helical segment. The Extracellular portion of the chain corresponds to 159 to 168 (GFWAFGRAFC). A helical transmembrane segment spans residues 169 to 191 (DVWAAVDVLCCTASILSLCTISV). Residues 192 to 212 (DRYVGVRHSLKYPSIMTERKA) are Cytoplasmic-facing. Residues 213–237 (AAILALLWAVAIVVSVGPLLGWKEP) traverse the membrane as a helical segment. At 238 to 250 (VPPDERFCGITEE) the chain is on the extracellular side. The chain crosses the membrane as a helical span at residues 251-274 (AGYAVFSSLCSFYLPMAVIVVMYC). Residues 275 to 348 (RVYVVARSTT…KFSREKKAAK (74 aa)) are Cytoplasmic-facing. Residues 349-373 (TLAIVVGVFVLCWFPFFFVLPLGSL) traverse the membrane as a helical segment. Topologically, residues 374-380 (FPQLKPS) are extracellular. The helical transmembrane segment at 381-405 (EGVFKVIFWLGYFNSCVNPLIYPCS) threads the bilayer. Topologically, residues 406-571 (SREFKRAFLR…DYSHLRETDI (166 aa)) are cytoplasmic. A lipid anchor (S-palmitoyl cysteine) is attached at Cys419. The tract at residues 465–487 (LPAPEATDTPSAPEAQAPVVGRR) is disordered.

This sequence belongs to the G-protein coupled receptor 1 family. Adrenergic receptor subfamily. ADRA1D sub-subfamily. As to quaternary structure, interacts with FLNA (via filamin repeat 21); increases PKA-mediated phosphorylation of FLNA. Post-translationally, palmitoylated. Palmitoylation by ZDHHC21 may increase the expression of the receptor and regulate downstream signaling.

The protein resides in the cell membrane. This alpha-adrenergic receptor mediates its effect through the influx of extracellular calcium. The protein is Alpha-1D adrenergic receptor (ADRA1D) of Sus scrofa (Pig).